We begin with the raw amino-acid sequence, 392 residues long: 1-deoxy-D-xylulose 5-phosphate reductoisomerase (392 aa).

NADPH contacts are provided by threonine 10, glycine 11, serine 12, isoleucine 13, and asparagine 124. Lysine 125 contributes to the 1-deoxy-D-xylulose 5-phosphate binding site. Glutamate 126 provides a ligand contact to NADPH. Aspartate 150 is a binding site for Mn(2+). 1-deoxy-D-xylulose 5-phosphate is bound by residues serine 151, glutamate 152, serine 180, and histidine 203. Glutamate 152 is a binding site for Mn(2+). Glycine 209 contacts NADPH. The 1-deoxy-D-xylulose 5-phosphate site is built by serine 216, asparagine 221, lysine 222, and glutamate 225. Glutamate 225 is a binding site for Mn(2+).

Belongs to the DXR family. The cofactor is Mg(2+). It depends on Mn(2+) as a cofactor.

The catalysed reaction is 2-C-methyl-D-erythritol 4-phosphate + NADP(+) = 1-deoxy-D-xylulose 5-phosphate + NADPH + H(+). It functions in the pathway isoprenoid biosynthesis; isopentenyl diphosphate biosynthesis via DXP pathway; isopentenyl diphosphate from 1-deoxy-D-xylulose 5-phosphate: step 1/6. In terms of biological role, catalyzes the NADPH-dependent rearrangement and reduction of 1-deoxy-D-xylulose-5-phosphate (DXP) to 2-C-methyl-D-erythritol 4-phosphate (MEP). The sequence is that of 1-deoxy-D-xylulose 5-phosphate reductoisomerase from Saccharophagus degradans (strain 2-40 / ATCC 43961 / DSM 17024).